Here is a 257-residue protein sequence, read N- to C-terminus: MSTGITYDEDRKTQLIAQYESVREVVNAEAKNVHVNENASKILLLVVSKLKPASDIQILYDHGVREFGENYVQELIEKAKLLPDDIKWHFIGGLQTNKCKDLAKVPNLYSVETIDSLKKAKKLNESRAKFQPDCNPILCNVQINTSHEDQKSGLNNEAEIFEVIDFFLSEECKYIKLNGLMTIGSWNVSHEDSKENRDFATLVEWKKKIDAKFGTSLKLSMGMSADFREAIRQGTAEVRIGTDIFGARPPKNEARII.

The residue at position 2 (S2) is an N-acetylserine. K49 bears the N6-(pyridoxal phosphate)lysine mark.

Belongs to the pyridoxal phosphate-binding protein YggS/PROSC family.

It is found in the cytoplasm. It localises to the nucleus. Pyridoxal 5'-phosphate (PLP)-binding protein, which may be involved in intracellular homeostatic regulation of pyridoxal 5'-phosphate (PLP), the active form of vitamin B6. The chain is Pyridoxal phosphate homeostasis protein from Saccharomyces cerevisiae (strain ATCC 204508 / S288c) (Baker's yeast).